Reading from the N-terminus, the 199-residue chain is FMN-dependent NADH:quinone oxidoreductase 2 (199 aa).

FMN is bound by residues Ser-10, 16-18 (SVS), and 96-99 (MYNF).

The protein belongs to the azoreductase type 1 family. As to quaternary structure, homodimer. FMN serves as cofactor.

The catalysed reaction is 2 a quinone + NADH + H(+) = 2 a 1,4-benzosemiquinone + NAD(+). The enzyme catalyses N,N-dimethyl-1,4-phenylenediamine + anthranilate + 2 NAD(+) = 2-(4-dimethylaminophenyl)diazenylbenzoate + 2 NADH + 2 H(+). In terms of biological role, quinone reductase that provides resistance to thiol-specific stress caused by electrophilic quinones. Also exhibits azoreductase activity. Catalyzes the reductive cleavage of the azo bond in aromatic azo compounds to the corresponding amines. In Pseudomonas fluorescens (strain ATCC BAA-477 / NRRL B-23932 / Pf-5), this protein is FMN-dependent NADH:quinone oxidoreductase 2.